A 268-amino-acid chain; its full sequence is MLAIAFPGIDPVAFELGPIVIRWYALAYLAGFVLGWRYCLALARSTPGRPSAEDYDDFLTWAVVGVILGGRIGYVLFYNLPFYLQNPLDALMVWHGGMSFHGGLIGVLGAILLFCWKRGLSPLAFGDLIAAAAPIGLFFGRIANFINGELYGRPAPDVSWAVVFPRDPLQVPRHPSQLYESFLEGAVLFVLLAILVRMPAVRGRAGMTAGIFFIGYGLSRIIAEFFREPDAQLGFLYAGATMGQLLSVPMVLFGVWLVAQARRRPAAI.

Helical transmembrane passes span Trp-23–Ala-43, Phe-58–Tyr-78, Gly-96–Trp-116, and Gly-119–Phe-139. A 1,2-diacyl-sn-glycero-3-phospho-(1'-sn-glycerol) is bound at residue Arg-141. A run of 3 helical transmembrane segments spans residues Ser-181 to Val-201, Gly-206 to Phe-226, and Ala-238 to Val-258.

Belongs to the Lgt family.

It is found in the cell inner membrane. It carries out the reaction L-cysteinyl-[prolipoprotein] + a 1,2-diacyl-sn-glycero-3-phospho-(1'-sn-glycerol) = an S-1,2-diacyl-sn-glyceryl-L-cysteinyl-[prolipoprotein] + sn-glycerol 1-phosphate + H(+). The protein operates within protein modification; lipoprotein biosynthesis (diacylglyceryl transfer). In terms of biological role, catalyzes the transfer of the diacylglyceryl group from phosphatidylglycerol to the sulfhydryl group of the N-terminal cysteine of a prolipoprotein, the first step in the formation of mature lipoproteins. The polypeptide is Phosphatidylglycerol--prolipoprotein diacylglyceryl transferase (Azospirillum brasilense).